A 468-amino-acid polypeptide reads, in one-letter code: 3-isopropylmalate dehydratase large subunit (468 aa).

[4Fe-4S] cluster contacts are provided by cysteine 346, cysteine 406, and cysteine 409.

This sequence belongs to the aconitase/IPM isomerase family. LeuC type 1 subfamily. As to quaternary structure, heterodimer of LeuC and LeuD. Requires [4Fe-4S] cluster as cofactor.

The enzyme catalyses (2R,3S)-3-isopropylmalate = (2S)-2-isopropylmalate. It participates in amino-acid biosynthesis; L-leucine biosynthesis; L-leucine from 3-methyl-2-oxobutanoate: step 2/4. In terms of biological role, catalyzes the isomerization between 2-isopropylmalate and 3-isopropylmalate, via the formation of 2-isopropylmaleate. This is 3-isopropylmalate dehydratase large subunit from Pseudoalteromonas atlantica (strain T6c / ATCC BAA-1087).